A 314-amino-acid chain; its full sequence is GTPase-interacting component 1 (314 aa).

Disordered regions lie at residues 112 to 156 (SRRH…KHDV), 199 to 221 (TMDS…QLDS), and 241 to 261 (LGDS…SFSG). A CRIB domain is found at 126 to 139 (ISTPFDFHHISHAN). Residues 140-156 (GKREDNPLESHEEKHDV) show a composition bias toward basic and acidic residues. Polar residues predominate over residues 208–221 (ETNNTPNGNKQLDS). Residues 251–260 (PSSPSVSSFS) show a composition bias toward low complexity.

Belongs to the BORG/CEP family. Interacts with GTP-bound CDC42.

It localises to the bud neck. The protein localises to the bud tip. The protein resides in the cytoplasm. It is found in the cell cortex. Its subcellular location is the cytoskeleton. Its function is as follows. Required for cell size and shape control, bud site selection, bud emergence, actin cytoskeletal organization, mitotic spindle orientation/positioning, and mating projection formation in response to mating pheromone. The polypeptide is GTPase-interacting component 1 (GIC1) (Saccharomyces cerevisiae (strain ATCC 204508 / S288c) (Baker's yeast)).